Reading from the N-terminus, the 162-residue chain is Putative auxin-responsive protein IAA28 (162 aa).

One can recognise a PB1 domain in the interval 23–118; sequence SRFVKVFMHG…TVKRIYIVPA (96 aa). Residues 122–141 are disordered; that stretch reads NESEYQEEEEDNAAAAATAD.

It belongs to the Aux/IAA family. As to quaternary structure, homodimers and heterodimers.

Its subcellular location is the nucleus. Functionally, aux/IAA proteins are short-lived transcriptional factors that function as repressors of early auxin response genes at low auxin concentrations. The chain is Putative auxin-responsive protein IAA28 (IAA28) from Oryza sativa subsp. japonica (Rice).